The primary structure comprises 214 residues: Glycerol-3-phosphate acyltransferase (214 aa).

5 consecutive transmembrane segments (helical) span residues 8 to 28 (LILAYLLGSIPTGLWIGQIFF), 70 to 90 (LLPLFLHINGISPMIFGLIAV), 111 to 131 (AGVVLGFSPLFFSYLIIIFIV), 144 to 164 (IVVAGFAIISVLIFPLLGIIL), and 165 to 185 (PSYDLLFTLIIILLASIILIR).

It belongs to the PlsY family. As to quaternary structure, probably interacts with PlsX.

The protein localises to the cell membrane. It catalyses the reaction an acyl phosphate + sn-glycerol 3-phosphate = a 1-acyl-sn-glycero-3-phosphate + phosphate. It participates in lipid metabolism; phospholipid metabolism. Its function is as follows. Catalyzes the transfer of an acyl group from acyl-phosphate (acyl-PO(4)) to glycerol-3-phosphate (G3P) to form lysophosphatidic acid (LPA). This enzyme utilizes acyl-phosphate as fatty acyl donor, but not acyl-CoA or acyl-ACP. This Streptococcus gordonii (strain Challis / ATCC 35105 / BCRC 15272 / CH1 / DL1 / V288) protein is Glycerol-3-phosphate acyltransferase.